The sequence spans 238 residues: Hydatid disease diagnostic antigen P-29 (238 aa).

In terms of domain architecture, BAR spans 18–238 (GELVNKNEKT…AKECSMMLGE (221 aa)).

This is Hydatid disease diagnostic antigen P-29 from Echinococcus granulosus (Hydatid tapeworm).